Reading from the N-terminus, the 487-residue chain is Probable cytochrome P450 516A1 (487 aa).

A helical transmembrane segment spans residues 1–21; sequence MIILLLSIIIFILYIVKIFKN. Cysteine 434 serves as a coordination point for heme.

This sequence belongs to the cytochrome P450 family. Heme is required as a cofactor.

Its subcellular location is the membrane. The sequence is that of Probable cytochrome P450 516A1 (cyp516A1) from Dictyostelium discoideum (Social amoeba).